A 248-amino-acid chain; its full sequence is tRNA uridine(34) hydroxylase (248 aa).

One can recognise a Rhodanese domain in the interval 124–218; the sequence is TKQDVIVVDT…YLEDTQNKNN (95 aa). Residue cysteine 178 is the Cysteine persulfide intermediate of the active site.

The protein belongs to the TrhO family.

The catalysed reaction is uridine(34) in tRNA + AH2 + O2 = 5-hydroxyuridine(34) in tRNA + A + H2O. In terms of biological role, catalyzes oxygen-dependent 5-hydroxyuridine (ho5U) modification at position 34 in tRNAs. This Rickettsia bellii (strain OSU 85-389) protein is tRNA uridine(34) hydroxylase.